Consider the following 692-residue polypeptide: Elongation factor G (692 aa).

Residues 9-284 (EKIRNIGIMA…AVVDYLPSPV (276 aa)) form the tr-type G domain. GTP-binding positions include 18–25 (AHIDAGKT), 82–86 (DTPGH), and 136–139 (NKMD).

This sequence belongs to the TRAFAC class translation factor GTPase superfamily. Classic translation factor GTPase family. EF-G/EF-2 subfamily.

Its subcellular location is the cytoplasm. Catalyzes the GTP-dependent ribosomal translocation step during translation elongation. During this step, the ribosome changes from the pre-translocational (PRE) to the post-translocational (POST) state as the newly formed A-site-bound peptidyl-tRNA and P-site-bound deacylated tRNA move to the P and E sites, respectively. Catalyzes the coordinated movement of the two tRNA molecules, the mRNA and conformational changes in the ribosome. The chain is Elongation factor G from Neorickettsia sennetsu (strain ATCC VR-367 / Miyayama) (Ehrlichia sennetsu).